Consider the following 1178-residue polypeptide: MSQRKFAGLRDNFNLLGEKNKILVANRGEIPIRIFRTAHELSMQTVAIYSHEDRLSTHKQKADEAYVIGEVGQYTPVGAYLAIDEIISIAQKHQVDFIHPGYGFLSENSEFADKVVKAGITWIGPPAEVIDSVGDKVSARNLAAKANVPTVPGTPGPIETVEEALDFVNEYGYPVIIKAAFGGGGRGMRVVREGDDVADAFQRATSEARTAFGNGTCFVERFLDKPKHIEVQLLADNHGNVVHLFERDCSVQRRHQKVVEVAPAKTLPREVRDAILTDAVKLAKECGYRNAGTAEFLVDNQNRHYFIEINPRIQVEHTITEEITGIDIVAAQIQIAAGASLPQLGLFQDKITTRGFAIQCRITTEDPAKNFQPDTGRIEVYRSAGGNGVRLDGGNAYAGTIISPHYDSMLVKCSCSGSTYEIVRRKMIRALIEFRIRGVKTNIPFLLTLLTNPVFIEGTYWTTFIDDTPQLFQMVSSQNRAQKLLHYLADVAVNGSSIKGQIGLPKLKSNPSVPHLHDAQGNVINVTKSAPPSGWRQVLLEKGPAEFARQVRQFNGTLLMDTTWRDAHQSLLATRVRTHDLATIAPTTAHALAGRFALECWGGATFDVAMRFLHEDPWERLRKLRSLVPNIPFQMLLRGANGVAYSSLPDNAIDHFVKQAKDNGVDIFRVFDALNDLEQLKVGVDAVKKAGGVVEATVCFSGDMLQPGKKYNLDYYLEIAEKIVQMGTHILGIKDMAGTMKPAAAKLLIGSLRAKYPDLPIHVHTHDSAGTAVASMTACALAGADVVDVAINSMSGLTSQPSINALLASLEGNIDTGINVEHVRELDAYWAEMRLLYSCFEADLKGPDPEVYQHEIPGGQLTNLLFQAQQLGLGEQWAETKRAYREANYLLGDIVKVTPTSKVVGDLAQFMVSNKLTSDDVRRLANSLDFPDSVMDFFEGLIGQPYGGFPEPFRSDVLRNKRRKLTCRPGLELEPFDLEKIREDLQNRFGDVDECDVASYNMYPRVYEDFQKMRETYGDLSVLPTRSFLSPLETDEEIEVVIEQGKTLIIKLQAVGDLNKKTGEREVYFDLNGEMRKIRVADRSQKVETVTKSKADMHDPLHIGAPMAGVIVEVKVHKGSLIKKGQPVAVLSAMKMEMIISSPSDGQVKEVFVSDGENVDSSDLLVLLEDQVPVETKA.

Residues 18–470 enclose the Biotin carboxylation domain; that stretch reads EKNKILVANR…WTTFIDDTPQ (453 aa). Positions 136, 220, and 255 each coordinate ATP. An ATP-grasp domain is found at 140-337; the sequence is RNLAAKANVP…IVAAQIQIAA (198 aa). The active site involves arginine 312. The Pyruvate carboxyltransferase domain maps to 557–824; the sequence is TLLMDTTWRD…DTGINVEHVR (268 aa). Substrate-binding positions include 565–569 and arginine 638; that span reads RDAHQ. Position 566 (aspartate 566) interacts with a divalent metal cation. A divalent metal cation contacts are provided by lysine 734, histidine 764, and histidine 766. Lysine 734 carries the N6-carboxylysine modification. Threonine 898 provides a ligand contact to substrate. The Biotinyl-binding domain occupies 1094-1169; that stretch reads KADMHDPLHI…DSSDLLVLLE (76 aa). Lysine 1135 carries the post-translational modification N6-biotinyllysine.

As to quaternary structure, homotetramer. The cofactor is biotin. Requires Zn(2+) as cofactor.

Its subcellular location is the cytoplasm. It catalyses the reaction hydrogencarbonate + pyruvate + ATP = oxaloacetate + ADP + phosphate + H(+). The protein operates within carbohydrate biosynthesis; gluconeogenesis. Functionally, pyruvate carboxylase catalyzes a 2-step reaction, involving the ATP-dependent carboxylation of the covalently attached biotin in the first step and the transfer of the carboxyl group to pyruvate in the second. The chain is Pyruvate carboxylase 1 (PYC1) from Saccharomyces cerevisiae (strain ATCC 204508 / S288c) (Baker's yeast).